Consider the following 451-residue polypeptide: Protein NINJA homolog 1 (451 aa).

Disordered stretches follow at residues 1–223, 321–346, and 427–451; these read MDDE…QGNP, ISQA…DDKK, and DAPG…SAQN. Positions 23–35 are enriched in basic and acidic residues; the sequence is KARDAPLEPKAEP. Polar residues-rich tracts occupy residues 38-49, 86-103, and 143-153; these read EESSSKGVSQTP, PGSS…QKPV, and ISISTDDGSTG. Residues 154-163 are compositionally biased toward acidic residues; it reads ENEDVAESEA. Positions 207 to 216 are enriched in low complexity; it reads SFSGSESSSG.

Belongs to the Ninja family. In terms of assembly, interacts with TIFY10C/JAZ8. Interacts with TIFY11A/JAZ9.

The protein resides in the nucleus. This chain is Protein NINJA homolog 1, found in Oryza sativa subsp. japonica (Rice).